The chain runs to 457 residues: tRNA modification GTPase MnmE (457 aa).

The (6S)-5-formyl-5,6,7,8-tetrahydrofolate site is built by Arg23, Glu86, and Arg125. A TrmE-type G domain is found at 221–377 (GVSVLIAGKP…LREAVFETFI (157 aa)). Asn231 contributes to the K(+) binding site. GTP is bound by residues 231-236 (NVGKSS), 250-256 (TSVPGTT), and 275-278 (DTAG). Ser235 lines the Mg(2+) pocket. K(+) contacts are provided by Thr250, Val252, and Thr255. Thr256 serves as a coordination point for Mg(2+). Lys457 provides a ligand contact to (6S)-5-formyl-5,6,7,8-tetrahydrofolate.

Belongs to the TRAFAC class TrmE-Era-EngA-EngB-Septin-like GTPase superfamily. TrmE GTPase family. In terms of assembly, homodimer. Heterotetramer of two MnmE and two MnmG subunits. The cofactor is K(+).

The protein resides in the cytoplasm. In terms of biological role, exhibits a very high intrinsic GTPase hydrolysis rate. Involved in the addition of a carboxymethylaminomethyl (cmnm) group at the wobble position (U34) of certain tRNAs, forming tRNA-cmnm(5)s(2)U34. This chain is tRNA modification GTPase MnmE, found in Geobacter metallireducens (strain ATCC 53774 / DSM 7210 / GS-15).